A 220-amino-acid polypeptide reads, in one-letter code: Uracil-DNA glycosylase (220 aa).

Aspartate 60 (proton acceptor) is an active-site residue.

It belongs to the uracil-DNA glycosylase (UDG) superfamily. UNG family.

Its subcellular location is the cytoplasm. The catalysed reaction is Hydrolyzes single-stranded DNA or mismatched double-stranded DNA and polynucleotides, releasing free uracil.. In terms of biological role, excises uracil residues from the DNA which can arise as a result of misincorporation of dUMP residues by DNA polymerase or due to deamination of cytosine. The chain is Uracil-DNA glycosylase from Francisella tularensis subsp. holarctica (strain FTNF002-00 / FTA).